Consider the following 243-residue polypeptide: Voltage-gated monoatomic cation channel TMEM109 (243 aa).

Residues 1-33 (MAGSGSSAPWGKHLLHAVLMVLVALVLLHSALA) form the signal peptide. Over 34-83 (QSHRDFAPPGQQRREAPVDLLTQIGRSVRETLDTWIGPETMHLISETLSQ) the chain is Lumenal. A helical transmembrane segment spans residues 84–104 (VMWAISSAISVAFFALSGIAA). The Cytoplasmic portion of the chain corresponds to 105-135 (QLLTALGLDGDHLTQGLKLSPSQVQTFLLWG). A helical transmembrane segment spans residues 136–156 (AGALVVYWLLSLLLGLVLAVL). Topologically, residues 157–185 (GRILGGLKLVIFLAGFVALVRSVPDPSTR) are lumenal. The chain crosses the membrane as a helical span at residues 186–205 (ALLLLALLTLYALLSRLTGS). Topologically, residues 206–243 (RASGAQLEAKVRGLERQVDELRWRQRRAAKGARSVEEE) are cytoplasmic.

Homooligomer. Interacts with CRYAB; in the cellular response to DNA damage. Post-translationally, the N-terminus is blocked. Widely expressed. Expressed in skeletal, cardiac and smooth muscle cells, in brain, including neuroglial cells, cerebral cortex neurons and cerebellum, but not Purkinje cells. Also detected in Paneth and Goblet cells of the small intestine (but not in the epithelium), duodenal gland, pancreas, parotid gland, testis, thyroid gland and adrenal gland, as well as in epidermis, choroid plexus, ductus epididymidis, lymphocytes, fibroblasts, endothelial cells and seminiferous epithelial cells (at protein level). Not detected in mucous cells of the duodenal gland, in hepatocytes nor in uriniferous tubules.

It localises to the nucleus outer membrane. The protein localises to the endoplasmic reticulum membrane. Its subcellular location is the sarcoplasmic reticulum membrane. It carries out the reaction K(+)(in) = K(+)(out). It catalyses the reaction Ca(2+)(in) = Ca(2+)(out). Functionally, functions as a voltage-gated monoatomic cation channel permeable to both potassium and calcium. Plays a role in the cellular response to DNA damage. The protein is Voltage-gated monoatomic cation channel TMEM109 of Oryctolagus cuniculus (Rabbit).